We begin with the raw amino-acid sequence, 530 residues long: Bifunctional purine biosynthesis protein PurH (530 aa).

Residues M1–V148 enclose the MGS-like domain.

It belongs to the PurH family.

The enzyme catalyses (6R)-10-formyltetrahydrofolate + 5-amino-1-(5-phospho-beta-D-ribosyl)imidazole-4-carboxamide = 5-formamido-1-(5-phospho-D-ribosyl)imidazole-4-carboxamide + (6S)-5,6,7,8-tetrahydrofolate. The catalysed reaction is IMP + H2O = 5-formamido-1-(5-phospho-D-ribosyl)imidazole-4-carboxamide. It functions in the pathway purine metabolism; IMP biosynthesis via de novo pathway; 5-formamido-1-(5-phospho-D-ribosyl)imidazole-4-carboxamide from 5-amino-1-(5-phospho-D-ribosyl)imidazole-4-carboxamide (10-formyl THF route): step 1/1. Its pathway is purine metabolism; IMP biosynthesis via de novo pathway; IMP from 5-formamido-1-(5-phospho-D-ribosyl)imidazole-4-carboxamide: step 1/1. This Vibrio cholerae serotype O1 (strain M66-2) protein is Bifunctional purine biosynthesis protein PurH.